The following is a 251-amino-acid chain: Triosephosphate isomerase (251 aa).

Position 9–11 (9–11) interacts with substrate; that stretch reads NWK. His-95 serves as the catalytic Electrophile. The Proton acceptor role is filled by Glu-167. Substrate contacts are provided by residues Gly-173, Ser-212, and 233–234; that span reads GG.

It belongs to the triosephosphate isomerase family. Homodimer.

The protein localises to the cytoplasm. It carries out the reaction D-glyceraldehyde 3-phosphate = dihydroxyacetone phosphate. It functions in the pathway carbohydrate biosynthesis; gluconeogenesis. Its pathway is carbohydrate degradation; glycolysis; D-glyceraldehyde 3-phosphate from glycerone phosphate: step 1/1. Involved in the gluconeogenesis. Catalyzes stereospecifically the conversion of dihydroxyacetone phosphate (DHAP) to D-glyceraldehyde-3-phosphate (G3P). This chain is Triosephosphate isomerase, found in Pseudomonas putida (strain W619).